The primary structure comprises 1379 residues: Partitioning defective protein 3 (1379 aa).

Positions 1–23 are enriched in low complexity; that stretch reads MSASSTSSSSTSCPEGGEPSGSC. Disordered regions lie at residues 1-32 and 208-335; these read MSASSTSSSSTSCPEGGEPSGSCKSSDEGEST and YNVG…SDRK. Polar residues-rich tracts occupy residues 239–256 and 272–284; these read SFDQIPQSGLRVSTPKPS and ILRSSLRTEASGS. 2 stretches are compositionally biased toward basic and acidic residues: residues 302–315 and 322–335; these read EVEKKLAEQDERKS and DKNPGRFARGSDRK. PDZ domains lie at 381-483 and 515-599; these read LVTF…IINR and VVEL…SRVS. A coiled-coil region spans residues 606–626; it reads TSASSENKENEETLKVVEEEK. The 92-residue stretch at 659 to 750 folds into the PDZ 3 domain; sequence VIPFINGSSS…EVGMISSNVR (92 aa). 5 disordered regions span residues 767–873, 887–918, 949–1085, 1273–1301, and 1350–1379; these read DLSR…MGAA, HQRQNSAPTSSTQKRSKSQPRSSSQRNYRSPM, QSME…GGNV, VEPVSGSSASATDRRGRSTSSGAVASGSS, and AYETRGGGAGGSPSQYRRRDQGPPHRFPQY. 2 stretches are compositionally biased toward low complexity: residues 776–786 and 798–826; these read SSPSPSSRMSS and ATRGTSSSGADSSHSRQSSASSAVPAVPA. 2 stretches are compositionally biased toward basic and acidic residues: residues 828-844 and 854-869; these read LTERDSIVSDGTSRNDE and FNREGLGRKSLSEKRG. A compositionally biased stretch (low complexity) spans 894–912; it reads PTSSTQKRSKSQPRSSSQR. Residues 967 to 977 are compositionally biased toward polar residues; sequence QIPTGSSSKVQ. Composition is skewed to basic and acidic residues over residues 1030–1040 and 1048–1060; these read KSRDASPEKTP and SVERPKSIIDERN. A compositionally biased stretch (low complexity) spans 1290–1301; it reads STSSGAVASGSS.

This sequence belongs to the PAR3 family. As to quaternary structure, required, together with pkc-3, for the localization of par-6; par-6 is involved in localizing/maintaining par-3 at the cell periphery. Interacts with par-6 and pkc-3 for localization at the periphery of anterior cortex of the embryo. In terms of tissue distribution, asymmetrically distributed at the periphery of the zygote and in dividing blastomeres of the germline lineage. Coexpressed with par-6; patchy expression observed at the periphery after completion of meiosis I and in meiosis II. On completion of metaphase II, expression is restricted to the anterior 85% of embryo length; this decreases to 55% in embryos between prophase and telophase of the first mitosis. During the first cleavage, expression is detected in the advancing furrow. Transiently coexpressed and colocalized asymmetrically with par-6 and pkc-3, in the developing somatic gonad, including the spermathecal precursor cells of L4 larvae.

It localises to the cytoplasm. Its function is as follows. In cooperation with pkc-3, required for establishing cell polarity and regulating spindle orientation in the early embryo. Localization is crucial for recruiting par-6 and pkc-3 to the peripheral apical cortex and restricting par-2 to basolateral surfaces. Necessary for apicobasal and anterior-posterior asymmetries associated with cell adhesion and gastrulation during the first few cycles of embryogenesis, and also for epithelial cell polarity in the distal spermatheca. Regulates the asymmetric localization of csnk-1, ppk-1 and gpr-1/2 during the first embryonic division. The protein is Partitioning defective protein 3 of Caenorhabditis elegans.